We begin with the raw amino-acid sequence, 511 residues long: Cytochrome P450 monooxygenase nodR (511 aa).

Residues 8–28 (ILFPISWEQSPIFLAVGLIFA) traverse the membrane as a helical segment. Residues Asn76 and Asn373 are each glycosylated (N-linked (GlcNAc...) asparagine). Position 452 (Cys452) interacts with heme.

Belongs to the cytochrome P450 family. Heme is required as a cofactor.

The protein resides in the membrane. The protein operates within secondary metabolite biosynthesis. Cytochrome P450 monooxygenase; part of the gene cluster that mediates the biosynthesis of the indole diterpenes nodulisporic acids (NA). Nodulisporic acid A (NAA) and its chemically modified derivatives are of particular significance because of their highly potent insecticidal activity against blood-feeding arthropods and lack of observable adverse effects on mammals, in particular the tremogenicity associated with the paspaline-derived IDTs is not observed. The geranylgeranyl diphosphate (GGPP) synthase ggs1, localized outside of the cluster, is proposed to catalyze the first step in nodulisporic acid biosynthesis via conversion of farnesyl pyrophosphate and isopentyl pyrophosphate into geranylgeranyl pyrophosphate (GGPP). Condensation of indole-3-glycerol phosphate with GGPP by the prenyl transferase nodC then forms 3-geranylgeranylindole (3-GGI). Epoxidation by the FAD-dependent monooxygenase nodM leads to a single-epoxidized-GGI that is substrate of the terpene cyclase nodB for cyclization to yield emindole SB. The terminal methyl carbon, C28, of emindole SB is then oxidized by the cytochrome P450 monooxygenase nodW to produce nodulisporic acid F (NAF), the pentacyclic core of NAA. NAF is converted to nodulisporic acid E (NAE) via prenylation. This step is probably performed by one of the indole diterpene prenyltransferases nodD1 or nodD2. Several oxidation steps performed by the FAD-linked oxidoreductase nodO and one of the cytochrome P450 monooxygenase nodR, nodX or nodZ further convert NAE to nodulisporic acid D (NAD). NAD is substrate of cytochrome P450 monooxygenase nodJ to produce the precursor of nodulisporic acid C (NAC), converted to NAC by one of the indole diterpene prenyltransferases nodD1 or nodD2. The FAD-dependent monooxygenase nodY2 then oxidizes NAC to nodulisporic acid B (NAB). Finally NAB is converted to NAA by one of the cytochrome P450 monooxygenases nodR, nodX or nodZ. In Hypoxylon pulicicidum, this protein is Cytochrome P450 monooxygenase nodR.